Here is a 247-residue protein sequence, read N- to C-terminus: MKIDLNADLGEGCASDSALLQLVSSANIACGFHAGDAVLMQQCVREALKNGVAIGAHPSFPDRENFGRTAMQLPPETVYAQVLYQIGALAAIVHAQGGELRHVKPHGMLYNQAAKEPPLADAIARAVRDADADLVLVGLAGSELIRAGQHYQLTTRQEVFADRGYQADGSLVPRSQPGALIESEEQALAQTLEMVQHNRVRSLSGEWAHVKAETVCLHGDGAHALDFARRLRAAFAGRNIDVSADLE.

Belongs to the LamB/PxpA family. In terms of assembly, forms a complex composed of PxpA, PxpB and PxpC.

It carries out the reaction 5-oxo-L-proline + ATP + 2 H2O = L-glutamate + ADP + phosphate + H(+). Functionally, catalyzes the cleavage of 5-oxoproline to form L-glutamate coupled to the hydrolysis of ATP to ADP and inorganic phosphate. This is 5-oxoprolinase subunit A from Klebsiella pneumoniae subsp. pneumoniae (strain ATCC 700721 / MGH 78578).